Consider the following 440-residue polypeptide: Cytochrome P450 monooygenase 1 (440 aa).

Heme is bound at residue cysteine 381.

This sequence belongs to the cytochrome P450 family. It depends on heme as a cofactor.

The protein operates within plant hormone biosynthesis; gibberellin biosynthesis. Its function is as follows. GA14 synthase; part of the gene cluster that mediates the biosynthesis of gibberellins (GAs), diterpenoids that may provide a selective advantage during infection of the preferred host plant, rice. Gibberellins (GAs) are diterpenoids and are synthesized via the mevalonate pathway. Biosynthesis of the major metabolite GA3 (gibberellic acid) from geranylgeranyl diphosphate (GGPP) requires 13 steps. The GGPP produced by the geranylgeranyl diphosphate synthase GGS2 is converted to ent-kaurene via ent-copalyldiphosphate in a two-step cyclization reaction performed by the bifunctional ent-copalyl diphosphate synthase/ent-kaurene synthase enzyme (CPS/KS). Ent-Kaurene is metabolized to GAs by a series of oxidation reactions catalyzed by cytochrome P450 monooxygenases. Cytochrome P450 monooxygenase P450-4 is an ent-kaurene oxidase that catalyzes the three oxidation steps between ent-kaurene and ent-kaurenoic acid. The highly multifunctional cytochrome P450 monooxygenase P450-1 then catalyzes four steps involving oxidation at two carbon atoms, in the main pathway from ent-kaurenoic acid to GA14 via GA12-aldehyde as well as producing kaurenolides and fujenoic acids as by-products. The cytochrome P450 monooxygenase P450-2 then converts GA14 to GA4 by removal of C-20. GA4 is further converted to GA7 by the GA4 desaturase DES via 1,2-desaturation before cytochrome P450 monooxygenase P450-3, a 13-hydroxylase, hydroxylates GA7 to GA3, the final product of the GA-biosynthetic pathway. This Gibberella fujikuroi (strain CBS 195.34 / IMI 58289 / NRRL A-6831) (Bakanae and foot rot disease fungus) protein is Cytochrome P450 monooygenase 1.